The primary structure comprises 666 residues: Fructose-1,6-bisphosphatase class 3 (666 aa).

Belongs to the FBPase class 3 family. Mn(2+) serves as cofactor.

It carries out the reaction beta-D-fructose 1,6-bisphosphate + H2O = beta-D-fructose 6-phosphate + phosphate. It participates in carbohydrate biosynthesis; gluconeogenesis. This chain is Fructose-1,6-bisphosphatase class 3, found in Phocaeicola vulgatus (strain ATCC 8482 / DSM 1447 / JCM 5826 / CCUG 4940 / NBRC 14291 / NCTC 11154) (Bacteroides vulgatus).